We begin with the raw amino-acid sequence, 279 residues long: Prephenate dehydratase (279 aa).

The 177-residue stretch at 2–178 (KIAYLGPRGS…NSTRFWLLGK (177 aa)) folds into the Prephenate dehydratase domain. An ACT domain is found at 194–272 (LALTLPDNLP…VNVRLLGNYS (79 aa)).

The catalysed reaction is prephenate + H(+) = 3-phenylpyruvate + CO2 + H2O. Its pathway is amino-acid biosynthesis; L-phenylalanine biosynthesis; phenylpyruvate from prephenate: step 1/1. This is Prephenate dehydratase (pheA) from Lactococcus lactis subsp. cremoris (strain MG1363).